Consider the following 112-residue polypeptide: Putative pterin-4-alpha-carbinolamine dehydratase (112 aa).

A disordered region spans residues 1–30 (MSDELQSRTCTPCRGDVPPMTKAEAKRQLA).

The protein belongs to the pterin-4-alpha-carbinolamine dehydratase family.

The catalysed reaction is (4aS,6R)-4a-hydroxy-L-erythro-5,6,7,8-tetrahydrobiopterin = (6R)-L-erythro-6,7-dihydrobiopterin + H2O. In Aromatoleum aromaticum (strain DSM 19018 / LMG 30748 / EbN1) (Azoarcus sp. (strain EbN1)), this protein is Putative pterin-4-alpha-carbinolamine dehydratase.